Consider the following 388-residue polypeptide: Salivary protein Tsal2A (388 aa).

Positions 1–18 (MSLLYGLLILAFTRSCLV) are cleaved as a signal peptide. The N-linked (GlcNAc...) asparagine glycan is linked to N260.

It belongs to the DNA/RNA non-specific endonuclease family. It depends on a divalent metal cation as a cofactor. Saliva (at protein level).

Its subcellular location is the secreted. Functionally, binds double-stranded DNA (dsDNA) with high affinity. Binds double-stranded RNA. Binds single-stranded DNA with lower affinity and with a preference for purine-rich sequences. Shows residual nuclease activity for dsDNA. Facilitates blood meal intake by lowering the local viscosity created by the release of host DNA. The polypeptide is Salivary protein Tsal2A (Glossina morsitans morsitans (Savannah tsetse fly)).